Reading from the N-terminus, the 214-residue chain is MDEIKIPKATARRLPLYYRYLIFLNDEGKEKVSSTELAEAVQVDSASIRRDFSYFGALGKRGYGYDVKNLLNFFKKILNQDTLTNVALVGVGNMGHALLNYNFKRTNNIRISAAFDINPEITGTIMSGVPVYDMSEMKKQLREQQITIAILCVPQTAAQKTANEMFDAGIKGIMNFTPLRLSAPSSVRVQNVDLATELQTLIYFLDSDKDKNKK.

A DNA-binding region (H-T-H motif) is located at residues 16–55 (LYYRYLIFLNDEGKEKVSSTELAEAVQVDSASIRRDFSYF). 90 to 95 (GVGNMG) contributes to the NAD(+) binding site.

It belongs to the transcriptional regulatory Rex family. Homodimer.

It localises to the cytoplasm. Modulates transcription in response to changes in cellular NADH/NAD(+) redox state. The polypeptide is Redox-sensing transcriptional repressor Rex (Lactobacillus gasseri (strain ATCC 33323 / DSM 20243 / BCRC 14619 / CIP 102991 / JCM 1131 / KCTC 3163 / NCIMB 11718 / NCTC 13722 / AM63)).